The chain runs to 530 residues: Probable flavin-containing monooxygenase 1 (530 aa).

FAD contacts are provided by residues 17–21, glutamate 38, 46–47, and 58–59; these read GAGVS, VW, and QS. 219-222 lines the NADP(+) pocket; the sequence is SAID.

This sequence belongs to the FMO family. The cofactor is FAD.

Required for the establishment of systemic acquired resistance (SAR). Not involved in local defense mechanisms. Confers a salicylic acid-dependent (SA) resistance to virulent pathogens such as P.syringae pv tomato and H.parasitica. The protein is Probable flavin-containing monooxygenase 1 (FMO1) of Arabidopsis thaliana (Mouse-ear cress).